Consider the following 181-residue polypeptide: Adenylate kinase (181 aa).

10–15 (GAGKGT) provides a ligand contact to ATP. An NMP region spans residues 30-59 (STGDLFRANISQQTPLGREAQKYMDAGDLV). Residues Thr31, Arg36, 57 to 59 (DLV), 85 to 88 (GYPR), and Gln92 each bind AMP. Residues 126–132 (ARGRNDD) form an LID region. Arg127 serves as a coordination point for ATP. AMP is bound by residues Arg129 and Arg140. Gly166 contacts ATP.

It belongs to the adenylate kinase family. As to quaternary structure, monomer.

The protein localises to the cytoplasm. The catalysed reaction is AMP + ATP = 2 ADP. It functions in the pathway purine metabolism; AMP biosynthesis via salvage pathway; AMP from ADP: step 1/1. Its function is as follows. Catalyzes the reversible transfer of the terminal phosphate group between ATP and AMP. Plays an important role in cellular energy homeostasis and in adenine nucleotide metabolism. This chain is Adenylate kinase, found in Nocardia farcinica (strain IFM 10152).